Consider the following 125-residue polypeptide: Mini-ribonuclease 3 (125 aa).

D11 is a catalytic residue.

The protein belongs to the MrnC RNase family. As to quaternary structure, homodimer. Requires Mg(2+) as cofactor.

The protein resides in the cytoplasm. Involved in correct processing of both the 5' and 3' ends of 23S rRNA precursor. Processes 30S rRNA precursor transcript even in absence of ribonuclease 3 (Rnc); Rnc processes 30S rRNA into smaller rRNA precursors. This is Mini-ribonuclease 3 from Acholeplasma laidlawii (strain PG-8A).